The chain runs to 68 residues: Large ribosomal subunit protein bL35 (68 aa).

Composition is skewed to basic residues over residues 1–11 (MPKLKTRSSAK) and 19–29 (SGKVKHGKAFA). Positions 1-54 (MPKLKTRSSAKKRFDVKKSGKVKHGKAFAKHLFTFSKTPKSKRSNRGTGHLRDM) are disordered.

This sequence belongs to the bacterial ribosomal protein bL35 family.

The protein is Large ribosomal subunit protein bL35 of Myxococcus xanthus (strain DK1622).